Reading from the N-terminus, the 153-residue chain is Aspartate carbamoyltransferase regulatory chain (153 aa).

Zn(2+) is bound by residues Cys109, Cys114, Cys138, and Cys141.

It belongs to the PyrI family. In terms of assembly, contains catalytic and regulatory chains. Requires Zn(2+) as cofactor.

Involved in allosteric regulation of aspartate carbamoyltransferase. The chain is Aspartate carbamoyltransferase regulatory chain from Enterobacter sp. (strain 638).